The primary structure comprises 146 residues: MFTGSAALNLDAKGRLTMPTRYRASLIDTCGGQLVLTLHPFDDCLALYPRAEFMDTAKKLSEQRDSNPQVRQLKRRFLGQAAEIEMDGSGRLLVPPELRAAINLEKRAMLIGQLHRFEIWKEESWADVDGTLDPAALPESVQELSF.

2 SpoVT-AbrB domains span residues 5–52 and 81–124; these read SAAL…PRAE and AAEI…KEES.

The protein belongs to the MraZ family. In terms of assembly, forms oligomers.

It localises to the cytoplasm. It is found in the nucleoid. This Alcanivorax borkumensis (strain ATCC 700651 / DSM 11573 / NCIMB 13689 / SK2) protein is Transcriptional regulator MraZ.